Here is a 425-residue protein sequence, read N- to C-terminus: Dual-specificity RNA methyltransferase RlmN (425 aa).

The Proton acceptor role is filled by glutamate 136. The region spanning glycine 142–arginine 381 is the Radical SAM core domain. Residues cysteine 149 and cysteine 392 are joined by a disulfide bond. 3 residues coordinate [4Fe-4S] cluster: cysteine 156, cysteine 160, and cysteine 163. Residues glycine 218–glutamate 219, serine 250, serine 272–histidine 274, and asparagine 349 contribute to the S-adenosyl-L-methionine site. The active-site S-methylcysteine intermediate is the cysteine 392.

It belongs to the radical SAM superfamily. RlmN family. [4Fe-4S] cluster serves as cofactor.

It is found in the cytoplasm. It carries out the reaction adenosine(2503) in 23S rRNA + 2 reduced [2Fe-2S]-[ferredoxin] + 2 S-adenosyl-L-methionine = 2-methyladenosine(2503) in 23S rRNA + 5'-deoxyadenosine + L-methionine + 2 oxidized [2Fe-2S]-[ferredoxin] + S-adenosyl-L-homocysteine. The enzyme catalyses adenosine(37) in tRNA + 2 reduced [2Fe-2S]-[ferredoxin] + 2 S-adenosyl-L-methionine = 2-methyladenosine(37) in tRNA + 5'-deoxyadenosine + L-methionine + 2 oxidized [2Fe-2S]-[ferredoxin] + S-adenosyl-L-homocysteine. In terms of biological role, specifically methylates position 2 of adenine 2503 in 23S rRNA and position 2 of adenine 37 in tRNAs. m2A2503 modification seems to play a crucial role in the proofreading step occurring at the peptidyl transferase center and thus would serve to optimize ribosomal fidelity. The polypeptide is Dual-specificity RNA methyltransferase RlmN (Methylorubrum extorquens (strain PA1) (Methylobacterium extorquens)).